Here is a 21-residue protein sequence, read N- to C-terminus: Ocellatin-4 (21 aa).

Ile-21 carries the post-translational modification Isoleucine amide.

As to expression, expressed by the skin dorsal glands.

It is found in the secreted. Has hemolytic activity against human erythrocytes (HC50=14.3 uM). Has antibacterial activity against the Gram-positive bacterium S.aureus ATCC 25923 (MIC=64 uM) and the Gram-negative bacterium E.coli ATCC 25922 (MIC=64 uM). This chain is Ocellatin-4, found in Leptodactylus ocellatus (Argus frog).